Reading from the N-terminus, the 734-residue chain is Monosaccharide-sensing protein 1 (734 aa).

The next 6 membrane-spanning stretches (helical) occupy residues 6 to 26, 44 to 64, 79 to 99, 102 to 122, 133 to 153, and 163 to 183; these read LVAL…ATIA, GLVV…SGPI, VMYF…VLCF, LLNG…ISET, TLPQ…VFTM, and AMLG…VFYL. The interval 351–403 is disordered; the sequence is YNKDNDDYATDDGAGDDDDSDNDLRSPLMSRQTTSMDKDMIPHPTSGSTLSMR. Acidic residues predominate over residues 357-371; that stretch reads DYATDDGAGDDDDSD. Residues serine 446 and serine 480 each carry the phosphoserine modification. Transmembrane regions (helical) follow at residues 510-530, 556-576, 588-608, 621-641, 653-673, and 680-700; these read ALVV…NGVL, ASFL…VVAM, LLWT…SELI, GCVV…PNIL, LCIA…TYSL, and IGLV…WIFV.

This sequence belongs to the major facilitator superfamily. Sugar transporter (TC 2.A.1.1) family. Binds to VIK at the tonoplast. In terms of processing, phosphorylated by VIK; this activation promotes carrier activity. As to expression, mostly expressed in juvenile and adult leaves, to a lower extent, in flower tissues, and, at low levels, in roots and stems.

It is found in the vacuole membrane. The catalysed reaction is D-glucose(out) + H(+)(in) = D-glucose(in) + H(+)(out). It catalyses the reaction sucrose(out) + H(+)(in) = sucrose(in) + H(+)(out). Its activity is regulated as follows. Enhanced activation by VIK-mediated phosphorylation promoting carrier activity and consequently vacuolar sugar accumulation. Sugar proton-coupled antiporter which contributes to vacuolar sugar import (e.g. monosaccharides including glucose, sucrose and fructose), particularly during stress responses (e.g. in response to cold). Required for cytosolic glucose homeostasis. The polypeptide is Monosaccharide-sensing protein 1 (Arabidopsis thaliana (Mouse-ear cress)).